The chain runs to 552 residues: MSGPRPVRAPRGSALTALGWQQEAALRMLQNNLDPEVAEHPDKLVVYGGTGKAARDWRSFDAMVRTLQTLKQDETMLVQSGRPVGVMQTHEWAPRVLIANSNLVGDWANWEEFRRLEALGLTMYGQMTAGSWIYIGTQGILQGTYETFAAVAAKKFGGTLAGTITLTAGLGGMGGAQPLAVTMNDGVAICIDVDPRAIERRIEHRYLDVKADSPEHALQLAVEARDARRPLSIGLLGNAAELLPRMLAESAPIDIVTDQTSAHDPLAYLPLGVDFDDMAGLAAEKPADFTRRARESMARHVEAMVGFMDAGAEVFDYGNSIRGEARLAGYDRAFDFPGFVPAYIRPLFCEGKGPFRWAALSGEASDIHKTDKAMLELFPENESLHRWIRMAGERVHFQGLPARICWLGYGERDKAGERFNDMVASGELAAPLAIGRDHLDCGSVASPYRETEAMLDGSDAIADWPLLNAMVNVASGASWVSLHHGGGVGMGRSIHAGQVSVADGTKLAGEKIRRVLTNDPGMGVIRHVDAGYDIAENVAADQGVRVPMTEGN.

NAD(+)-binding positions include 48-49 (GG), Gln126, 172-174 (GMG), Asp192, 238-239 (NA), 259-263 (QTSAH), 268-269 (YL), and Tyr317. Residue Cys405 is part of the active site. Gly487 is an NAD(+) binding site.

It belongs to the urocanase family. Requires NAD(+) as cofactor.

It is found in the cytoplasm. The enzyme catalyses 4-imidazolone-5-propanoate = trans-urocanate + H2O. It participates in amino-acid degradation; L-histidine degradation into L-glutamate; N-formimidoyl-L-glutamate from L-histidine: step 2/3. Catalyzes the conversion of urocanate to 4-imidazolone-5-propionate. The protein is Urocanate hydratase of Streptomyces griseus subsp. griseus (strain JCM 4626 / CBS 651.72 / NBRC 13350 / KCC S-0626 / ISP 5235).